The primary structure comprises 525 residues: Lysine--tRNA ligase (525 aa).

The 'HIGH' region signature appears at 40–48; sequence ASGIPHMGS. Positions 295-299 match the 'KMSKS' region motif; sequence KISKS. Lys298 is an ATP binding site.

This sequence belongs to the class-I aminoacyl-tRNA synthetase family.

It is found in the cytoplasm. It catalyses the reaction tRNA(Lys) + L-lysine + ATP = L-lysyl-tRNA(Lys) + AMP + diphosphate. This chain is Lysine--tRNA ligase (lysS), found in Cenarchaeum symbiosum (strain A).